A 214-amino-acid chain; its full sequence is Small ribosomal subunit protein uS3 (214 aa).

The 69-residue stretch at 39–107 folds into the KH type-2 domain; the sequence is IRAYLLKKPA…EVWVAVEEVK (69 aa).

Belongs to the universal ribosomal protein uS3 family. In terms of assembly, part of the 30S ribosomal subunit. Forms a tight complex with proteins S10 and S14.

In terms of biological role, binds the lower part of the 30S subunit head. Binds mRNA in the 70S ribosome, positioning it for translation. This is Small ribosomal subunit protein uS3 from Protochlamydia amoebophila (strain UWE25).